Here is a 179-residue protein sequence, read N- to C-terminus: Ubiquitin-conjugating enzyme E2 C (179 aa).

Alanine 2 bears the N-acetylalanine mark. At serine 3 the chain carries Phosphoserine. Residues 30–175 enclose the UBC core domain; sequence PVGKRLQQEL…LQETYSKQVS (146 aa). Cysteine 114 acts as the Glycyl thioester intermediate in catalysis.

This sequence belongs to the ubiquitin-conjugating enzyme family. In terms of assembly, component of the APC/C complex, composed of at least 14 distinct subunits that assemble into a complex of at least 19 chains with a combined molecular mass of around 1.2 MDa. Within this complex, directly interacts with ANAPC2. In terms of processing, autoubiquitinated by the APC/C complex, leading to its degradation by the proteasome. Its degradation plays a central role in APC/C regulation, allowing cyclin-A accumulation before S phase entry. APC/C substrates inhibit the autoubiquitination of UBE2C/UBCH10 but not its E2 function, hence APC/C remaining active until its substrates have been destroyed.

The catalysed reaction is S-ubiquitinyl-[E1 ubiquitin-activating enzyme]-L-cysteine + [E2 ubiquitin-conjugating enzyme]-L-cysteine = [E1 ubiquitin-activating enzyme]-L-cysteine + S-ubiquitinyl-[E2 ubiquitin-conjugating enzyme]-L-cysteine.. The enzyme catalyses S-ubiquitinyl-[E1 ubiquitin-activating enzyme]-L-cysteine + [acceptor protein]-L-lysine = [E1 ubiquitin-activating enzyme]-L-cysteine + N(6)-monoubiquitinyl-[acceptor protein]-L-lysine.. It functions in the pathway protein modification; protein ubiquitination. Its function is as follows. Accepts ubiquitin from the E1 complex and catalyzes its covalent attachment to other proteins. In vitro catalyzes 'Lys-11'- and 'Lys-48'-linked polyubiquitination. Acts as an essential factor of the anaphase promoting complex/cyclosome (APC/C), a cell cycle-regulated ubiquitin ligase that controls progression through mitosis. Acts by initiating 'Lys-11'-linked polyubiquitin chains on APC/C substrates, leading to the degradation of APC/C substrates by the proteasome and promoting mitotic exit. In Mus musculus (Mouse), this protein is Ubiquitin-conjugating enzyme E2 C (Ube2c).